The chain runs to 105 residues: Thiosulfate sulfurtransferase GlpE (105 aa).

The 89-residue stretch at 15–103 (MQQGAILVDI…WCRAELPIDT (89 aa)) folds into the Rhodanese domain. Cys63 acts as the Cysteine persulfide intermediate in catalysis.

It belongs to the GlpE family.

The protein localises to the cytoplasm. It catalyses the reaction thiosulfate + hydrogen cyanide = thiocyanate + sulfite + 2 H(+). The enzyme catalyses thiosulfate + [thioredoxin]-dithiol = [thioredoxin]-disulfide + hydrogen sulfide + sulfite + 2 H(+). Functionally, transferase that catalyzes the transfer of sulfur from thiosulfate to thiophilic acceptors such as cyanide or dithiols. May function in a CysM-independent thiosulfate assimilation pathway by catalyzing the conversion of thiosulfate to sulfite, which can then be used for L-cysteine biosynthesis. The sequence is that of Thiosulfate sulfurtransferase GlpE from Haemophilus influenzae (strain 86-028NP).